The chain runs to 183 residues: 3-hydroxydecanoyl-[acyl-carrier-protein] dehydratase (183 aa).

Residue His77 is part of the active site.

Belongs to the thioester dehydratase family. FabA subfamily. Homodimer.

The protein resides in the cytoplasm. The catalysed reaction is a (3R)-hydroxyacyl-[ACP] = a (2E)-enoyl-[ACP] + H2O. It carries out the reaction (3R)-hydroxydecanoyl-[ACP] = (2E)-decenoyl-[ACP] + H2O. It catalyses the reaction (2E)-decenoyl-[ACP] = (3Z)-decenoyl-[ACP]. It functions in the pathway lipid metabolism; fatty acid biosynthesis. Its function is as follows. Necessary for the introduction of cis unsaturation into fatty acids. Catalyzes the dehydration of (3R)-3-hydroxydecanoyl-ACP to E-(2)-decenoyl-ACP and then its isomerization to Z-(3)-decenoyl-ACP. Can catalyze the dehydratase reaction for beta-hydroxyacyl-ACPs with saturated chain lengths up to 16:0, being most active on intermediate chain length. This chain is 3-hydroxydecanoyl-[acyl-carrier-protein] dehydratase, found in Hahella chejuensis (strain KCTC 2396).